We begin with the raw amino-acid sequence, 173 residues long: Large ribosomal subunit protein uL10 (173 aa).

Belongs to the universal ribosomal protein uL10 family. As to quaternary structure, part of the ribosomal stalk of the 50S ribosomal subunit. The N-terminus interacts with L11 and the large rRNA to form the base of the stalk. The C-terminus forms an elongated spine to which L12 dimers bind in a sequential fashion forming a multimeric L10(L12)X complex.

Forms part of the ribosomal stalk, playing a central role in the interaction of the ribosome with GTP-bound translation factors. The protein is Large ribosomal subunit protein uL10 of Cupriavidus necator (strain ATCC 17699 / DSM 428 / KCTC 22496 / NCIMB 10442 / H16 / Stanier 337) (Ralstonia eutropha).